The sequence spans 330 residues: Malate dehydrogenase (330 aa).

Residue 12 to 18 coordinates NAD(+); sequence GAAGQIG. Substrate is bound by residues Arg93 and Arg99. NAD(+)-binding positions include Asn106, Gln113, and 130–132; that span reads VGN. Positions 132 and 163 each coordinate substrate. His188 acts as the Proton acceptor in catalysis.

This sequence belongs to the LDH/MDH superfamily. MDH type 2 family.

It carries out the reaction (S)-malate + NAD(+) = oxaloacetate + NADH + H(+). Functionally, catalyzes the reversible oxidation of malate to oxaloacetate. This chain is Malate dehydrogenase, found in Legionella pneumophila subsp. pneumophila (strain Philadelphia 1 / ATCC 33152 / DSM 7513).